The chain runs to 686 residues: L-type lectin-domain containing receptor kinase VII.1 (686 aa).

The first 20 residues, Met1–Ala20, serve as a signal peptide directing secretion. Positions Ile21–Ser256 are legume-lectin like. Topologically, residues Ile21 to Trp286 are extracellular. Residues Asn29, Asn34, Asn52, Asn64, Asn111, Asn123, Asn168, Asn203, Asn224, and Asn259 are each glycosylated (N-linked (GlcNAc...) asparagine). The helical transmembrane segment at Phe287–Phe307 threads the bilayer. The Cytoplasmic segment spans residues Ala308 to Arg686. Residues Phe347–Phe628 form the Protein kinase domain. ATP-binding positions include Ile353 to Val361 and Lys376. The Proton acceptor role is filled by Asp475.

It in the C-terminal section; belongs to the protein kinase superfamily. Ser/Thr protein kinase family. This sequence in the N-terminal section; belongs to the leguminous lectin family.

The protein resides in the cell membrane. The catalysed reaction is L-seryl-[protein] + ATP = O-phospho-L-seryl-[protein] + ADP + H(+). The enzyme catalyses L-threonyl-[protein] + ATP = O-phospho-L-threonyl-[protein] + ADP + H(+). In Arabidopsis thaliana (Mouse-ear cress), this protein is L-type lectin-domain containing receptor kinase VII.1 (LECRK71).